The primary structure comprises 110 residues: Phosphoribosyl-ATP pyrophosphatase (110 aa).

This sequence belongs to the PRA-PH family.

Its subcellular location is the cytoplasm. The enzyme catalyses 1-(5-phospho-beta-D-ribosyl)-ATP + H2O = 1-(5-phospho-beta-D-ribosyl)-5'-AMP + diphosphate + H(+). The protein operates within amino-acid biosynthesis; L-histidine biosynthesis; L-histidine from 5-phospho-alpha-D-ribose 1-diphosphate: step 2/9. The polypeptide is Phosphoribosyl-ATP pyrophosphatase (Lacticaseibacillus casei (strain BL23) (Lactobacillus casei)).